We begin with the raw amino-acid sequence, 104 residues long: MAAKIRRDDEVIVLTGKDKGKRGKVKNVLSSGKVIIEGINLVKKHQKPVPALNQPGGIVEKEAAIQVSNVAIFNAATGKADRVGFRFEDGKKVRFFKSNSETIK.

The protein belongs to the universal ribosomal protein uL24 family. As to quaternary structure, part of the 50S ribosomal subunit.

Its function is as follows. One of two assembly initiator proteins, it binds directly to the 5'-end of the 23S rRNA, where it nucleates assembly of the 50S subunit. In terms of biological role, one of the proteins that surrounds the polypeptide exit tunnel on the outside of the subunit. The sequence is that of Large ribosomal subunit protein uL24 from Shigella flexneri.